A 1779-amino-acid chain; its full sequence is 6-methylsalicylic acid synthase (1779 aa).

The span at 1 to 11 (MSASRSSTKFS) shows a compositional bias: polar residues. The interval 1–40 (MSASRSSTKFSTPAEGSDNGKEFTTPATSTEGHEVPDRPG) is disordered. A compositionally biased stretch (basic and acidic residues) spans 31–40 (EGHEVPDRPG). A Ketosynthase family 3 (KS3) domain is found at 43–472 (LADVAIIGMA…GTVSHAVLEA (430 aa)). Active-site for beta-ketoacyl synthase activity residues include cysteine 215, histidine 350, and histidine 392. Positions 586–883 (WIFSGHGAQW…TPTMVRRQPA (298 aa)) are malonyl-CoA:ACP transacylase (MAT) domain. Serine 672 (for acyl/malonyl transferase activity) is an active-site residue. Residues 942-1218 (THDPAANNLL…SFAGLEGESF (277 aa)) are product template (PT) domain. The segment at 948–1064 (NNLLGKRIAL…AAVGAANVVP (117 aa)) is N-terminal hotdog fold. Residues 948–1219 (NNLLGKRIAL…FAGLEGESFS (272 aa)) form the PKS/mFAS DH domain. The Proton acceptor; for dehydratase activity role is filled by histidine 980. Residues 1079–1219 (PQKLADSFSI…FAGLEGESFS (141 aa)) are C-terminal hotdog fold. Aspartate 1138 acts as the Proton donor; for dehydratase activity in catalysis. The 75-residue stretch at 1703–1777 (QHLRDVINGC…HLVKHFTKEL (75 aa)) folds into the Carrier domain. Serine 1737 carries the O-(pantetheine 4'-phosphoryl)serine modification.

The catalysed reaction is 3 malonyl-CoA + acetyl-CoA + NADPH + 3 H(+) = 6-methylsalicylate + 3 CO2 + NADP(+) + 4 CoA + H2O. Its pathway is secondary metabolite biosynthesis; terpenoid biosynthesis. In terms of biological role, non-reducing polyketide synthase; part of the gene cluster that mediates the biosynthesis of yanuthone D, a fungal isoprenoid epoxycyclohexenone that acts as an antibiotic against fungi and bacteria. The first step of the pathway is the synthesis of 6-methylsalicylic acid (6-MSA) by the polyketide synthase yanA. 6-MSA is then converted to m-cresol by the decarboxylase yanB. The cytochrome P450 monooxygenase yanC then catalyzes the oxidation of m-cresol to toluquinol. Epoxidation of toluquinol is then performed by the short chain dehydrogenase yanD, with the help of yanE, and a further prenylation by yanG leads to 7-deacetoxyyanuthone A. The next step is the hydroxylation of C-22 of 7-deacetoxyyanuthone A by the cytochrome P450 monooxygenase yanH to yield 22-deacetylyanuthone A. O-Mevalon transferase yanI then attaches mevalon to the hydroxyl group of 22-deacetylyanuthone A to produce yanuthone E. Finally, the FAD-dependent monooxygenase yanF oxidizes the hydroxyl group at C15 of yanuthone E to form yanuthone D. Furthermore, several branching points in the pathway lead to the production of yanuthones F and G from 7-deacetoxyyanuthone A; yanuthones H and I from 22-deacetylyanuthone A; and yanuthone J from yanuthone E. The sequence is that of 6-methylsalicylic acid synthase from Aspergillus niger (strain ATCC 1015 / CBS 113.46 / FGSC A1144 / LSHB Ac4 / NCTC 3858a / NRRL 328 / USDA 3528.7).